A 324-amino-acid polypeptide reads, in one-letter code: Delta-aminolevulinic acid dehydratase (324 aa).

Cys-120, Cys-122, and Cys-130 together coordinate Zn(2+). Catalysis depends on Lys-195, which acts as the Schiff-base intermediate with substrate. 5-aminolevulinate is bound by residues Arg-205 and Arg-217. Glu-233 is a binding site for Mg(2+). The active-site Schiff-base intermediate with substrate is Lys-248. Positions 274 and 313 each coordinate 5-aminolevulinate.

This sequence belongs to the ALAD family. Homooctamer. Requires Zn(2+) as cofactor.

The catalysed reaction is 2 5-aminolevulinate = porphobilinogen + 2 H2O + H(+). It participates in porphyrin-containing compound metabolism; protoporphyrin-IX biosynthesis; coproporphyrinogen-III from 5-aminolevulinate: step 1/4. Functionally, catalyzes an early step in the biosynthesis of tetrapyrroles. Binds two molecules of 5-aminolevulinate per subunit, each at a distinct site, and catalyzes their condensation to form porphobilinogen. This is Delta-aminolevulinic acid dehydratase (hemB) from Bacillus subtilis (strain 168).